The chain runs to 1318 residues: DNA-directed RNA polymerase subunit beta' (1318 aa).

Zn(2+) contacts are provided by cysteine 221, cysteine 295, cysteine 302, and cysteine 305.

This sequence belongs to the RNA polymerase beta' chain family. RpoC2 subfamily. In terms of assembly, in cyanobacteria the RNAP catalytic core is composed of 2 alpha, 1 beta, 1 beta', 1 gamma and 1 omega subunit. When a sigma factor is associated with the core the holoenzyme is formed, which can initiate transcription. Zn(2+) is required as a cofactor.

It carries out the reaction RNA(n) + a ribonucleoside 5'-triphosphate = RNA(n+1) + diphosphate. Functionally, DNA-dependent RNA polymerase catalyzes the transcription of DNA into RNA using the four ribonucleoside triphosphates as substrates. This Synechococcus elongatus (strain ATCC 33912 / PCC 7942 / FACHB-805) (Anacystis nidulans R2) protein is DNA-directed RNA polymerase subunit beta'.